The chain runs to 500 residues: Glutathione reductase (500 aa).

Residues S12 and G13 each contribute to the FAD site. S12 provides a ligand contact to glutathione. Glutathione is bound at residue R19. Residues E32, T39, C40, and K48 each contribute to the FAD site. Cysteines 40 and 45 form a disulfide. Y95 is a glutathione binding site. A111 contacts FAD. The NADP(+) site is built by I187, E190, R207, R213, and G272. 2 residues coordinate FAD: D312 and T354. Residue R362 coordinates glutathione. Residue V384 coordinates NADP(+). An FAD-binding site is contributed by H485. H485 acts as the Proton acceptor in catalysis.

Belongs to the class-I pyridine nucleotide-disulfide oxidoreductase family. As to quaternary structure, homodimer. FAD is required as a cofactor.

It localises to the cytoplasm. The catalysed reaction is 2 glutathione + NADP(+) = glutathione disulfide + NADPH + H(+). Catalyzes the reduction of glutathione disulfide (GSSG) to reduced glutathione (GSH). Constitutes the major mechanism to maintain a high GSH:GSSG ratio in the cytosol. In Plasmodium falciparum (isolate K1 / Thailand), this protein is Glutathione reductase.